Reading from the N-terminus, the 746-residue chain is 1,4-alpha-glucan branching enzyme GlgB (746 aa).

Asp418 (nucleophile) is an active-site residue. Glu471 serves as the catalytic Proton donor.

The protein belongs to the glycosyl hydrolase 13 family. GlgB subfamily. In terms of assembly, monomer.

It catalyses the reaction Transfers a segment of a (1-&gt;4)-alpha-D-glucan chain to a primary hydroxy group in a similar glucan chain.. It participates in glycan biosynthesis; glycogen biosynthesis. Catalyzes the formation of the alpha-1,6-glucosidic linkages in glycogen by scission of a 1,4-alpha-linked oligosaccharide from growing alpha-1,4-glucan chains and the subsequent attachment of the oligosaccharide to the alpha-1,6 position. This is 1,4-alpha-glucan branching enzyme GlgB from Nitrosospira multiformis (strain ATCC 25196 / NCIMB 11849 / C 71).